Reading from the N-terminus, the 131-residue chain is MAPKAEKKPASKAPAEKKPAAKKTASSTDGGKKRTKARKETYSSYIYKVLKQTHPDTGISQKAMSIMNSFVNDIFERIASEASKLAAYNKKSTISAREVQTAVRLILPGELAKHAVSEGTRAVTKYSSAQN.

A compositionally biased stretch (basic and acidic residues) spans 1 to 19 (MAPKAEKKPASKAPAEKKP). A disordered region spans residues 1-38 (MAPKAEKKPASKAPAEKKPAAKKTASSTDGGKKRTKAR). N6-acetyllysine; alternate occurs at positions 7 and 8. Residues lysine 7 and lysine 8 each participate in a glycyl lysine isopeptide (Lys-Gly) (interchain with G-Cter in SUMO); alternate cross-link. Phosphoserine is present on serine 11. Lysine 12 is subject to N6-acetyllysine. Position 17 is an N6-acetyllysine; alternate (lysine 17). Residue lysine 17 forms a Glycyl lysine isopeptide (Lys-Gly) (interchain with G-Cter in SUMO); alternate linkage. A Glycyl lysine isopeptide (Lys-Gly) (interchain with G-Cter in SUMO) cross-link involves residue lysine 18. Residue lysine 125 forms a Glycyl lysine isopeptide (Lys-Gly) (interchain with G-Cter in ubiquitin) linkage.

Belongs to the histone H2B family. The nucleosome is a histone octamer containing two molecules each of H2A, H2B, H3 and H4 assembled in one H3-H4 heterotetramer and two H2A-H2B heterodimers. The octamer wraps approximately 147 bp of DNA. Monoubiquitinated by the UBC2-BRE1 complex to form H2BK123ub1. H2BK123ub1 gives a specific tag for epigenetic transcriptional activation and is also prerequisite for H3K4me and H3K79me formation. H2BK123ub1 also modulates the formation of double-strand breaks during meiosis and is a prerequisite for DNA-damage checkpoint activation. In terms of processing, phosphorylated by STE20 to form H2BS10ph during progression through meiotic prophase. May be correlated with chromosome condensation. Post-translationally, acetylated by GCN5 to form H2BK11ac and H2BK16ac. H2BK16ac can also be formed by ESA1. Acetylation of N-terminal lysines and particularly formation of H2BK11acK16ac has a positive effect on transcription. Sumoylation to form H2BK6su or H2BK7su, and probably also H2BK16su or H2BK17su, occurs preferentially near the telomeres and represses gene transcription.

It is found in the nucleus. Its subcellular location is the chromosome. Core component of nucleosome. Nucleosomes wrap and compact DNA into chromatin, limiting DNA accessibility to the cellular machineries which require DNA as a template. Histones thereby play a central role in transcription regulation, DNA repair, DNA replication and chromosomal stability. DNA accessibility is regulated via a complex set of post-translational modifications of histones, also called histone code, and nucleosome remodeling. This Lodderomyces elongisporus (strain ATCC 11503 / CBS 2605 / JCM 1781 / NBRC 1676 / NRRL YB-4239) (Yeast) protein is Histone H2B (HTB1).